The primary structure comprises 398 residues: Dual-specificity RNA methyltransferase RlmN (398 aa).

Glu-121 serves as the catalytic Proton acceptor. The Radical SAM core domain occupies 127 to 370 (ETDRGTLCVS…VRTPRGRDIL (244 aa)). Residues Cys-134 and Cys-373 are joined by a disulfide bond. 3 residues coordinate [4Fe-4S] cluster: Cys-141, Cys-145, and Cys-148. S-adenosyl-L-methionine is bound by residues 199 to 200 (GE), Ser-231, 253 to 255 (SLH), and Asn-330. Cys-373 functions as the S-methylcysteine intermediate in the catalytic mechanism.

Belongs to the radical SAM superfamily. RlmN family. The cofactor is [4Fe-4S] cluster.

It is found in the cytoplasm. The enzyme catalyses adenosine(2503) in 23S rRNA + 2 reduced [2Fe-2S]-[ferredoxin] + 2 S-adenosyl-L-methionine = 2-methyladenosine(2503) in 23S rRNA + 5'-deoxyadenosine + L-methionine + 2 oxidized [2Fe-2S]-[ferredoxin] + S-adenosyl-L-homocysteine. It catalyses the reaction adenosine(37) in tRNA + 2 reduced [2Fe-2S]-[ferredoxin] + 2 S-adenosyl-L-methionine = 2-methyladenosine(37) in tRNA + 5'-deoxyadenosine + L-methionine + 2 oxidized [2Fe-2S]-[ferredoxin] + S-adenosyl-L-homocysteine. Functionally, specifically methylates position 2 of adenine 2503 in 23S rRNA and position 2 of adenine 37 in tRNAs. m2A2503 modification seems to play a crucial role in the proofreading step occurring at the peptidyl transferase center and thus would serve to optimize ribosomal fidelity. This Rhodopseudomonas palustris (strain BisB5) protein is Dual-specificity RNA methyltransferase RlmN.